A 631-amino-acid polypeptide reads, in one-letter code: Phosphomethylpyrimidine synthase (631 aa).

Residues asparagine 239, methionine 268, tyrosine 297, histidine 333, 353-355, 394-397, and glutamate 433 each bind substrate; these read SRG and DGLR. A Zn(2+)-binding site is contributed by histidine 437. Tyrosine 460 contacts substrate. Histidine 501 lines the Zn(2+) pocket. [4Fe-4S] cluster is bound by residues cysteine 581, cysteine 584, and cysteine 589.

The protein belongs to the ThiC family. As to quaternary structure, homodimer. It depends on [4Fe-4S] cluster as a cofactor.

It carries out the reaction 5-amino-1-(5-phospho-beta-D-ribosyl)imidazole + S-adenosyl-L-methionine = 4-amino-2-methyl-5-(phosphooxymethyl)pyrimidine + CO + 5'-deoxyadenosine + formate + L-methionine + 3 H(+). It participates in cofactor biosynthesis; thiamine diphosphate biosynthesis. Functionally, catalyzes the synthesis of the hydroxymethylpyrimidine phosphate (HMP-P) moiety of thiamine from aminoimidazole ribotide (AIR) in a radical S-adenosyl-L-methionine (SAM)-dependent reaction. This chain is Phosphomethylpyrimidine synthase, found in Escherichia fergusonii (strain ATCC 35469 / DSM 13698 / CCUG 18766 / IAM 14443 / JCM 21226 / LMG 7866 / NBRC 102419 / NCTC 12128 / CDC 0568-73).